We begin with the raw amino-acid sequence, 123 residues long: Small ribosomal subunit protein uS12 (123 aa).

Residues 1–29 (MPTINQLVRKGRVPQKAKSKVPAMEQNPQ) are disordered. The segment covering 9-19 (RKGRVPQKAKS) has biased composition (basic residues). A 3-methylthioaspartic acid modification is found at D89.

This sequence belongs to the universal ribosomal protein uS12 family. Part of the 30S ribosomal subunit. Contacts proteins S8 and S17. May interact with IF1 in the 30S initiation complex.

In terms of biological role, with S4 and S5 plays an important role in translational accuracy. Functionally, interacts with and stabilizes bases of the 16S rRNA that are involved in tRNA selection in the A site and with the mRNA backbone. Located at the interface of the 30S and 50S subunits, it traverses the body of the 30S subunit contacting proteins on the other side and probably holding the rRNA structure together. The combined cluster of proteins S8, S12 and S17 appears to hold together the shoulder and platform of the 30S subunit. The protein is Small ribosomal subunit protein uS12 of Erythrobacter litoralis (strain HTCC2594).